The chain runs to 228 residues: General odorant-binding protein 71 (228 aa).

The signal sequence occupies residues 1–20 (MCGAIVLLLLVGTSPAPVEG). The disordered stretch occupies residues 50 to 131 (TMGEWGQRDR…GNSSSSSSST (82 aa)). The segment covering 55 to 72 (GQRDRNGEEQQMMRDYGR) has biased composition (basic and acidic residues). Residues 83 to 99 (GGQTSGSSSSGSAGEHS) show a composition bias toward low complexity. Over residues 111–120 (AGQGGNGTRS) the composition is skewed to gly residues. Residues 121 to 131 (GGNSSSSSSST) are compositionally biased toward low complexity. 2 cysteine pairs are disulfide-bonded: Cys138/Cys199 and Cys185/Cys208.

The protein belongs to the PBP/GOBP family.

The protein resides in the secreted. Present in the aqueous fluid surrounding olfactory sensory dendrites and are thought to aid in the capture and transport of hydrophobic odorants into and through this fluid. This is General odorant-binding protein 71 (Obp71) from Anopheles gambiae (African malaria mosquito).